The primary structure comprises 357 residues: Protein pelota homolog (357 aa).

The protein belongs to the eukaryotic release factor 1 family. Pelota subfamily. As to quaternary structure, monomer. The cofactor is a divalent metal cation.

It localises to the cytoplasm. Its function is as follows. May function in recognizing stalled ribosomes, interact with stem-loop structures in stalled mRNA molecules, and effect endonucleolytic cleavage of the mRNA. May play a role in the release non-functional ribosomes and degradation of damaged mRNAs. Has endoribonuclease activity. In Thermococcus kodakarensis (strain ATCC BAA-918 / JCM 12380 / KOD1) (Pyrococcus kodakaraensis (strain KOD1)), this protein is Protein pelota homolog.